Consider the following 367-residue polypeptide: Alanine racemase (367 aa).

The active-site Proton acceptor; specific for D-alanine is the lysine 40. N6-(pyridoxal phosphate)lysine is present on lysine 40. Arginine 136 provides a ligand contact to substrate. The active-site Proton acceptor; specific for L-alanine is tyrosine 263. A substrate-binding site is contributed by methionine 310.

It belongs to the alanine racemase family. Pyridoxal 5'-phosphate serves as cofactor.

The enzyme catalyses L-alanine = D-alanine. Its pathway is amino-acid biosynthesis; D-alanine biosynthesis; D-alanine from L-alanine: step 1/1. Catalyzes the interconversion of L-alanine and D-alanine. May also act on other amino acids. This Streptococcus pneumoniae (strain Taiwan19F-14) protein is Alanine racemase (alr).